Reading from the N-terminus, the 450-residue chain is Ig mu chain C region (450 aa).

The sequence is that of Ig mu chain C region from Canis lupus familiaris (Dog).